Reading from the N-terminus, the 538-residue chain is Cytochrome P450 monooxygenase okaG (538 aa).

A helical transmembrane segment spans residues 3–23 (LISPLAAVLSAMAIVLGLLFF). C484 serves as a coordination point for heme.

It belongs to the cytochrome P450 family. The cofactor is heme.

The protein resides in the membrane. The catalysed reaction is 12-deshydroxyl okaramine E + 2 reduced [NADPH--hemoprotein reductase] + 2 O2 = 3-desmethyl okaramine B + 2 oxidized [NADPH--hemoprotein reductase] + 2 H2O + 2 H(+). It participates in alkaloid biosynthesis. Its function is as follows. Nonribosomal peptide synthetase; part of the gene cluster that mediates the biosynthesis of okaramine B, a prenylated indole alkaloid that possesses an unusual octacyclic ring system, including a four-membered azetidine ring and an eight-membered azocine ring, and that exhibits insecticidal activity against silkworm larvae. Within the pathway, okaG acts as a 2,3-diol synthase that installs 2,3-diol on the okaramine scaffold to convert 12-deshydroxyl okaramine E into 3-desmethyl okaramine B. OkaG is also able to produce use okaramine E and produce okaramine D with the help of the methyltransferase okaF. The biosynthesis begins with the NRPS okaA that condenses two tryptophan molecules into cyclo(L-Trp-L-Trp). Prenylation by the prenyltransferase okaC then leads to the formation of cyclo(N8-(alpha,alpha-dimethylallyl)-L-Trp-6a-(alpha,alpha-dime-thylallyl)-L-Trp). This is followed by indole 2,3-epoxidation by the FAD-dependent monooxygenase okaB to facilitate the formation of the hexahydropyrrolo[2,3-b]indole (HPI) moiety of okaramine C. The cytochrome P450 monooxygenase okaD then likely catalyzes formation of the eight-membered ring of okaramine A. The dioxygenase okaE further forms the unusual 2-dimethyl-3-methyl-azetidine ring to yield 12-deshydroxyl okaramine E, as well as the hydroxylation of 12-deshydroxyl okaramine E to produce okaramine E. The cytochrome P450 monoxygenase okaG converts 12-deshydroxyl okaramine E into 3-desmethyl okaramine B which is further methylated by the methyltransferase okaF into okaramine B. In a shunt pathway, okaG and okaF together are also able to convert okaramine E into okaramine D. Okaramine H is produced by nonenzymatic conversion from okaramine A. In Penicillium ochrochloron, this protein is Cytochrome P450 monooxygenase okaG.